A 64-amino-acid chain; its full sequence is Large ribosomal subunit protein bL33c (64 aa).

This sequence belongs to the bacterial ribosomal protein bL33 family.

Its subcellular location is the plastid. It localises to the organellar chromatophore. This is Large ribosomal subunit protein bL33c from Paulinella chromatophora.